We begin with the raw amino-acid sequence, 91 residues long: Small ribosomal subunit protein uS19 (91 aa).

This sequence belongs to the universal ribosomal protein uS19 family.

Its function is as follows. Protein S19 forms a complex with S13 that binds strongly to the 16S ribosomal RNA. This chain is Small ribosomal subunit protein uS19, found in Azoarcus sp. (strain BH72).